A 122-amino-acid polypeptide reads, in one-letter code: Small ribosomal subunit protein uS13 (122 aa).

The segment at 95 to 122 (GLPVRGQKTKTNARTRKGPKRTVANKKK) is disordered.

Belongs to the universal ribosomal protein uS13 family. In terms of assembly, part of the 30S ribosomal subunit. Forms a loose heterodimer with protein S19. Forms two bridges to the 50S subunit in the 70S ribosome.

Its function is as follows. Located at the top of the head of the 30S subunit, it contacts several helices of the 16S rRNA. In the 70S ribosome it contacts the 23S rRNA (bridge B1a) and protein L5 of the 50S subunit (bridge B1b), connecting the 2 subunits; these bridges are implicated in subunit movement. Contacts the tRNAs in the A and P-sites. The chain is Small ribosomal subunit protein uS13 from Agathobacter rectalis (strain ATCC 33656 / DSM 3377 / JCM 17463 / KCTC 5835 / VPI 0990) (Eubacterium rectale).